The primary structure comprises 74 residues: Ribosome modulation factor (74 aa).

It belongs to the ribosome modulation factor family.

The protein resides in the cytoplasm. Functionally, during stationary phase, converts 70S ribosomes to an inactive dimeric form (100S ribosomes). The polypeptide is Ribosome modulation factor (Cellvibrio japonicus (strain Ueda107) (Pseudomonas fluorescens subsp. cellulosa)).